The primary structure comprises 87 residues: DNA-directed RNA polymerase subunit omega (87 aa).

It belongs to the RNA polymerase subunit omega family. The RNAP catalytic core consists of 2 alpha, 1 beta, 1 beta' and 1 omega subunit. When a sigma factor is associated with the core the holoenzyme is formed, which can initiate transcription.

It catalyses the reaction RNA(n) + a ribonucleoside 5'-triphosphate = RNA(n+1) + diphosphate. Functionally, promotes RNA polymerase assembly. Latches the N- and C-terminal regions of the beta' subunit thereby facilitating its interaction with the beta and alpha subunits. This Pseudomonas entomophila (strain L48) protein is DNA-directed RNA polymerase subunit omega.